The following is a 195-amino-acid chain: Probable GTP-binding protein EngB (195 aa).

The 172-residue stretch at 24-195 folds into the EngB-type G domain; that stretch reads GLTEVALSGR…EIWNFIETYI (172 aa). Residues 32–39, 59–63, 77–80, 144–147, and 176–178 contribute to the GTP site; these read GRSNVGKS, GKTQT, DVPG, TKED, and YSS. Mg(2+)-binding residues include Ser39 and Thr61.

Belongs to the TRAFAC class TrmE-Era-EngA-EngB-Septin-like GTPase superfamily. EngB GTPase family. Requires Mg(2+) as cofactor.

Necessary for normal cell division and for the maintenance of normal septation. This chain is Probable GTP-binding protein EngB, found in Staphylococcus epidermidis (strain ATCC 35984 / DSM 28319 / BCRC 17069 / CCUG 31568 / BM 3577 / RP62A).